The chain runs to 312 residues: Pantothenate kinase (312 aa).

97-104 (GSVAVGKS) contacts ATP.

The protein belongs to the prokaryotic pantothenate kinase family.

The protein localises to the cytoplasm. It catalyses the reaction (R)-pantothenate + ATP = (R)-4'-phosphopantothenate + ADP + H(+). It participates in cofactor biosynthesis; coenzyme A biosynthesis; CoA from (R)-pantothenate: step 1/5. The polypeptide is Pantothenate kinase (Mycolicibacterium smegmatis (strain ATCC 700084 / mc(2)155) (Mycobacterium smegmatis)).